Here is a 117-residue protein sequence, read N- to C-terminus: Hainantoxin-XV-4 (117 aa).

Positions 1–20 (MKLCAVIIASLLVCVAVASS) are cleaved as a signal peptide. The interval 20 to 55 (SSDNQKEFAQEKEMTREETQSLGEHEKDDEVTGSEE) is disordered. A propeptide spanning residues 21–56 (SDNQKEFAQEKEMTREETQSLGEHEKDDEVTGSEER) is cleaved from the precursor. Basic and acidic residues predominate over residues 23 to 55 (NQKEFAQEKEMTREETQSLGEHEKDDEVTGSEE). Disulfide bonds link C58-C72, C65-C78, C69-C115, and C71-C91.

Belongs to the neurotoxin 03 (Tx2) family. 02 subfamily. HNTX-XV sub-subfamily. As to expression, expressed by the venom gland.

It is found in the secreted. Putative ion channel inhibitor. This chain is Hainantoxin-XV-4, found in Cyriopagopus hainanus (Chinese bird spider).